We begin with the raw amino-acid sequence, 592 residues long: Tegument protein US23 (592 aa).

Residues 407 to 491 (PRSLGDGEEE…NNVVPNVERR (85 aa)) are disordered. Positions 460–481 (ADDEEQGEDDDDSGAEPMEPEE) are enriched in acidic residues.

The protein belongs to the herpesviridae US22 family.

It localises to the virion tegument. This chain is Tegument protein US23 (US23), found in Homo sapiens (Human).